The primary structure comprises 85 residues: Small ribosomal subunit protein bS16 (85 aa).

This sequence belongs to the bacterial ribosomal protein bS16 family.

This chain is Small ribosomal subunit protein bS16, found in Acinetobacter baylyi (strain ATCC 33305 / BD413 / ADP1).